A 72-amino-acid polypeptide reads, in one-letter code: Large ribosomal subunit protein bL31c (72 aa).

This sequence belongs to the bacterial ribosomal protein bL31 family. Type A subfamily. As to quaternary structure, part of the 50S ribosomal subunit.

The protein localises to the plastid. The protein resides in the chloroplast. In terms of biological role, binds the 23S rRNA. The chain is Large ribosomal subunit protein bL31c from Trieres chinensis (Marine centric diatom).